We begin with the raw amino-acid sequence, 361 residues long: Thymidine kinase (361 aa).

Residue 17–24 participates in ATP binding; sequence GPHGVGKS. Glu-46 functions as the Proton acceptor in the catalytic mechanism. Substrate-binding residues include Tyr-64 and Gln-88. Arg-184 lines the ATP pocket. Arg-190 is a substrate binding site.

This sequence belongs to the herpesviridae thymidine kinase family. Homodimer.

The catalysed reaction is thymidine + ATP = dTMP + ADP + H(+). Its function is as follows. Catalyzes the transfer of the gamma-phospho group of ATP to thymidine to generate dTMP in the salvage pathway of pyrimidine synthesis. The dTMP serves as a substrate for DNA polymerase during viral DNA replication. Allows the virus to be reactivated and to grow in non-proliferative cells lacking a high concentration of phosphorylated nucleic acid precursors. This is Thymidine kinase from Saimiriine herpesvirus 1 (strain MV-5-4-PSL) (SaHV-1).